Here is a 459-residue protein sequence, read N- to C-terminus: Cysteine--tRNA ligase (459 aa).

Residue C31 participates in Zn(2+) binding. Residues 33 to 43 (PTVYYNPHIGN) carry the 'HIGH' region motif. 3 residues coordinate Zn(2+): C216, H241, and E245. A 'KMSKS' region motif is present at residues 274–278 (KMSKS). K277 contacts ATP.

This sequence belongs to the class-I aminoacyl-tRNA synthetase family. In terms of assembly, monomer. The cofactor is Zn(2+).

Its subcellular location is the cytoplasm. It carries out the reaction tRNA(Cys) + L-cysteine + ATP = L-cysteinyl-tRNA(Cys) + AMP + diphosphate. In Rickettsia conorii (strain ATCC VR-613 / Malish 7), this protein is Cysteine--tRNA ligase.